We begin with the raw amino-acid sequence, 61 residues long: Putative antitoxin PYRAB11980 (61 aa).

The protein belongs to the UPF0165 family.

Possibly the antitoxin component of a type II toxin-antitoxin (TA) system. The chain is Putative antitoxin PYRAB11980 from Pyrococcus abyssi (strain GE5 / Orsay).